Consider the following 1062-residue polypeptide: MSAGTHCGPPGNRAPPFARLCCVSAALGMLWSPACLAFNLDVDKLTVYSGPEGSYFGYSLDFYIPDARTASVLVGAPKANTSQPDIVEGGAVYYCPWPSERSAQCKQIPFDTTNNRKIRVNGTKEPIEFKSNQWFGATVRAHKGKVVACAPLYHWRTLKPNPAKDPVGTCYVAIQNFSAYAEHSPCRNSNADPEGQGYCQAGFSLDFYKNGDLIVGGPGSFYWQGQVITVSIADIIANYSFKDILRKLAAEKQTDVAPASYDDSYLGYSVAAGEFTGDSQQELVAGIPRGAQNFGYVSIINSTDMTFIQNFTGEQMASYFGYTVVVSDVNNDGMDDILVGAPLFMEREFESNPREVGQVYLYLQASALLFQDPQVLTGTETFGRFGSSVAHLGDLNQDGYNDIAIGVPFAGKDQRGKVLIYNGNPRGLHSKPSQVLQGIWGSQTIPSGFGFSLRGDADIDKNDYPDLLVGAFGKGKVAVYRARPVVTVDAQLLLHPMIINLENKTCQIPEFPTPVACFSVRVCASIAGQSISNTIALLAEVQLDFLKQKGAIKRTLFLHNHQSHFTFPFVMKQQKSLHCQDFMVYLRDETEFRDKLSPINISLNYSLDDSTFKDSLEVKPILNHYRDNVVTEQAHILVDCGEDNLCVPDLKLSARPDKHQIIIGDENHLMLIINARNEGEGAYEAELFVIIPEEADYVGIERNNKGLRPLSCEYKMENVTRMVVCDLGNPMVTGTNFSLGLRFAVPRLEKTNMSINFDLQIRSSNKDNPDSNFERVQINITAIAQVEIRGVSHPPQIVLPIHNWEPEKKPHKEEEVGPLVEHIYELHNIGPSTISDSILDVGWPFSARDEFLLYIFHLQTLGPLQCQTNPEINPQDIKPAASPEDTPELSAFLRNATIPHLVRKRDVPVVQLHRQSPARILNCTNIDCLQISCAVGRLGGGESAVLKVRSRLWAHTFLKRKNDHYALASLVSFEVKKMPYKEQPAKLPAGSTAVKTSVIWATPNVSFSIPLWVIILAILLGLLVLAILTLALWKCGFFDRARPPQDEMTDREQLTSDKTPEA.

The N-terminal stretch at 1–35 is a signal peptide; that stretch reads MSAGTHCGPPGNRAPPFARLCCVSAALGMLWSPAC. Residues 36–1010 are Extracellular-facing; the sequence is LAFNLDVDKL…ATPNVSFSIP (975 aa). FG-GAP repeat units lie at residues 41-104, 121-182, 187-239, 252-305, 306-371, 372-430, and 434-497; these read DVDK…RSAQ, NGTK…AYAE, RNSN…IANY, KQTD…STDM, TFIQ…LLFQ, DPQV…GLHS, and QVLQ…LHPM. N-linked (GlcNAc...) asparagine glycosylation is present at asparagine 80. Cysteine 95 and cysteine 105 form a disulfide bridge. The N-linked (GlcNAc...) asparagine glycan is linked to asparagine 121. The cysteines at positions 149 and 170 are disulfide-linked. A glycan (N-linked (GlcNAc...) asparagine) is linked at asparagine 176. Cysteine 186 and cysteine 199 are disulfide-bonded. Residue asparagine 238 is glycosylated (N-linked (GlcNAc...) asparagine). The Ca(2+) site is built by glutamate 274, threonine 276, aspartate 278, and glutamate 282. N-linked (GlcNAc...) asparagine glycosylation is found at asparagine 301 and asparagine 310. Residues aspartate 328, asparagine 330, aspartate 332, aspartate 336, aspartate 394, asparagine 396, aspartate 398, tyrosine 400, and aspartate 402 each coordinate Ca(2+). The Cell attachment site motif lies at 454–456; that stretch reads RGD. Aspartate 458, aspartate 460, asparagine 462, tyrosine 464, and aspartate 466 together coordinate Ca(2+). Asparagine 503 carries N-linked (GlcNAc...) asparagine glycosylation. 2 cysteine pairs are disulfide-bonded: cysteine 506-cysteine 517 and cysteine 523-cysteine 579. N-linked (GlcNAc...) asparagine glycans are attached at residues asparagine 600 and asparagine 604. Cystine bridges form between cysteine 640–cysteine 646 and cysteine 712–cysteine 725. N-linked (GlcNAc...) asparagine glycans are attached at residues asparagine 718, asparagine 736, asparagine 752, asparagine 779, asparagine 895, and asparagine 922. 2 disulfide bridges follow: cysteine 866/cysteine 923 and cysteine 928/cysteine 933. An N-linked (GlcNAc...) asparagine glycan is attached at asparagine 1004. The helical transmembrane segment at 1011-1031 threads the bilayer; it reads LWVIILAILLGLLVLAILTLA. Residues 1032 to 1062 are Cytoplasmic-facing; that stretch reads LWKCGFFDRARPPQDEMTDREQLTSDKTPEA.

Belongs to the integrin alpha chain family. As to quaternary structure, heterodimer of an alpha and a beta subunit. The alpha subunit is composed of a heavy and a light chain linked by a disulfide bond. Alpha-8 associates with beta-1. As to expression, in brain, expressed in deep cortex, hippocampal CA1, basolateral amygdala and striatum. In kidney, expressed in glomerular mesengium (at protein level).

The protein localises to the membrane. The protein resides in the cell membrane. Its function is as follows. Integrin alpha-8/beta-1 functions in the genesis of kidney and probably of other organs by regulating the recruitment of mesenchymal cells into epithelial structures. It recognizes the sequence R-G-D in a wide array of ligands including TNC, FN1, SPP1 TGFB1, TGFB3 and VTN. NPNT is probably its functional ligand in kidney genesis. Neuronal receptor for TNC it mediates cell-cell interactions and regulates neurite outgrowth of sensory and motor neurons. The protein is Integrin alpha-8 (Itga8) of Mus musculus (Mouse).